We begin with the raw amino-acid sequence, 133 residues long: Large ribosomal subunit protein bL19 (133 aa).

Belongs to the bacterial ribosomal protein bL19 family.

Functionally, this protein is located at the 30S-50S ribosomal subunit interface and may play a role in the structure and function of the aminoacyl-tRNA binding site. This chain is Large ribosomal subunit protein bL19, found in Stenotrophomonas maltophilia (strain K279a).